We begin with the raw amino-acid sequence, 3579 residues long: MQTREFPQRPLGLLLVLLVVLLQSSLIKSYLIIVHEDTPPGTVIFNASVYKLGSERHYKINAHKSANFVHHLVSVNHKDGQIQLRKALKCDGIYYPNLFTFYVDSTSNRLRSIDYYSLPVRIFVSGHSCNEDRRIEQELHHHHYEEEDNTGYSKRRRRRSTQEMIQLNGNQLEEVFRQNSTEFRAGDLIFGDSFDNEMRHRILSRKRRAVGSPDPLHLQPALHRRISDAKQWISETYASYAIHTTDKWNQICLRRSQFINSLNAFLPRSVCQHCKVSFLDVNDERFAIEHQSRDLVASRDVCIAESMWKVSITFNIRCDRRDIVDSDHRLKIVYHHQEFNDTDIARRVRRELRNQSPYFEQALYVASVLEEQPAGAAVTTVRARDPEDSPVVYSMVSLLDSRSQSLFKVDSRTGVVTTSASLDRELMDVHYFRVVATDDSFPPRSGTTTLQVNVLDCNDHSPTFEAEQFEASIREGATVGSTVITLRATDQDIGKNAEIEYGIEAVTDGAGLAQDQEMPIFRIDSRSGVISTRSSLDRETSDSYHLLVTAADLASAQSERRTATASVQVKVLDDNDNYPQFSERTYTVQVPEDQWGGTEDNTVAHIRATDADQGNNAAIRYAIIGGNTQSQFSIDSMSGDVSLVKPLDYESVRSYRLVIRAQDGGSPSRSNTTQLLVNVIDANDNAPRFYTSQFQESVLENVPVGYNIIRVQAYDSDEGANAEITYSISERDDNFPLAVDPRTGWVQTIKPLDREEQGRFAFQVVAKDGGVPPKSASSSVVITVQDVNDNDPAFNPKYYEANVGEDQPPGTPVTTVTATDPDEDSRLHYEITTGNTRGRFAITSQNGRGLITIAQSLDYKQEKRFLLTVAATDSGGRSDTATVHINITDANNFAPIFENAPYSASVFEDAPVGTTVLVVSATDSDVGVNAQITYSLNEESINGLGSPDPFSINPQTGAIVTNAPLDRETTSGYLLTVTAKDGGNPSLSDTTDVEIGVTDVNDNAPAFKSPLYQASILEDALVGTSVIQVAASDPDVGLNGRIKYLLSDRDIEDGSFVIDPTSGTIRTNKGLDRESVAVFHLTAIAVDKGSPPLSSTVEVQIRLEDVNDSPPTFASDKITLYVPENSPVGSVVGEIHAHDPDEGVNAVVHYSIIGGDDSNAFSLVTRPGSERAQLLTMTELDYESTRKRFELVVRAASPPLRNDAHIEILVTDVNDNAPVLRDFQVIFNNFRDHFPSGEIGRIPAFDADVSDKLHYRILSGNNANLLRLNSSSGGLVLSPQLNTNVPKFATMEVSVSDGINEAKAIMQLSVRLITEDMLFNSVTVRLNEMTEEAFLSPLLNFFLDGLAAIIPCPKEHIFVFSIQDDTDVSSRILNVSFSARRPDVSHEEFYTPQYLQERVYLNRAILARLATVEVLPFDDNLCVREPCLNFEECLTVLKFGNASEFIHSDTVLFRPIYPVNTFACSCPEGFTGSKEHYLCDTEVDLCYSDPCQNGGTCVRREGGYTCVCPSTHTGQNCETGVGHLRPCPSETCEGGLSCLSNYPSSQPPPYTATCELRARAFGRNSFLTFESLKQRHRFNLKLRFATVQENGLLLYNGRYNELHDFIALEIHEGHVSFSFSLGDHSERISVIQEAKVSDGKWHQVEVVYLNRSVTLVLDNCDTAIALSGQLGDRWSCANRTTLKLDKRCSLLTETCHRFLDLTGPLQVGGLPRIPAHFPVTNRDFVGCISDLRIDDRFVDLNSYVADNGTLAGCPQKAPLCQSEPCFNGGTCREGWGTYSCECPEGYAGNSCQDNIPAPWRFSGDGSLSFNPLLRPIQLPWTTSFSLRTRQKEAFLLQIQIGQNSSAAVCLRQGVLYYIFDGEPMYLAGAFLSDGEWHRVEIRWQQGSEIHFSVDYGQRSGSVPMSQKVQGLYVGKIVMGSPDGSIGAVPEASPFEGCIQDVRIGAGQSVLSRPTIRENVEDGCESRAQCPDHCPNHSSCQSSWDLSTCECDSGYVGTDCAPICTVRPCASGVCRANTSLPRGYDCECNSSSRHGDYCEKELQQPCPGGWWGERVCGPCRCDLAQGYHPDCNKTTGQCYCKTNHYQPPNETACLSCDCYSIGSFSGACNPLTGQCECREGVIGRRCDSCSNPYAEVTLSGCEVVYDACPRSFAGGVWWPRTPLGGVAIEGCPPPARGKGQRSCDVQSGSWNTPDMYNCTSEPFVELRRQLSQLEKLELELNSFVAIKMAEQLRKACEAVDRRGASKDQKISGNGRPNRRYKMESSFLLSNGGNVWSHELEMDYLSDELKFTHDRLYGADLLVTEGLLQELINYELMQSGLNLSHSQDKYFIKNLVDAASVILDRKYEAEWRRATELIQRGPDDLVDAFNKYLVVLARSQHDTYTSPFEIVQPNMALGLDIVTTESLFGYEPEQLSEYHRSKYLKPNAFTTESVVLPDTSGFLQHSARQRPVISFPKYNNYILDRRKFDQHTKVLVPLEMLGITPPESDEISQSGRRGSSHDHRAIVAYAQYKDVGQLLPDLYDETITRRWGVDVELATPILSLQILVPSMEREQETQRLEIPSRKIFSSSSPSSSSSSGSTEQQFVEVFDVPKAPTSSSEQQIEDIRITAHEIPPPVSSVEQQEASSDEDGEEREPHIRLNLDDIEFHGNSGEEVISPDSPEMLNPNYEGVSSTGSDEQPKGENEAVYRDRRLVKRQVEITYPSEQMQQTEQVVYRSLGSPHLAQPIKLQMWLDVDSARFGPRSNPQCVRWNSFTNQWTRLGCQTEIPDFDGDFNPAAQQAILVNCSCTHISSYAVIVDVIDPEDIPEPSLLVQITSYSAFLVSLPLLLGVLLALALLRGQQTNSNTIHQNIVLCVFCAELLFFVGMQSRRQLLESEFPCKLTAICLHYFWLAAFAWTTVDCVHLYRMLTEMRDINHGPMGFYFAMGYGAPAIVVGLSVGVRAHEYGNSLFCWLSVYEPVVWWLVGPIAGMSVVNLLILFVSVKAAFTLKDHVLGFGNLRTLLWLSVVSLPLMGVMWVLAVLAASEHSQLLSLLLSGVVLLHALFCLIGYCIINKRVRENLQRTCLRCMGRKVPLLDSSMVVSNSSHNVNAAARPSNFLASGYDTTTRRNIGISASSTTSRSTAKTSSSPYSDGQLRQTSTSTSNYNSASDAPSFLRGFESSTTGRSRGGEEKPSRRQRKDSDSGSETDGRSLELASSHSSDDDESRTARSSGTHRSTAVSSTPAYLPNITEHVQATTPPELNVVQSPQLFPSVNKPVYAPRWSSQLPDAYLQSPPNIGRWSQDTGSDNEHVHGQAKMTISPNPLPNPDLTDTSYLQQHHNKINMPPSILENIRDAREGYEDSLYGRRGEYPDKYGSYKPPSHYGSEKDYPGGGSGSQTIGHMRSFHPDAAYLSDNIYDKQRTLGSGYLGAKSESPYLSKDRITPDIYGSRDGHYSLKRQPAYATDSLHSVHSLLKNDYHQQQQQQQQHHLQDRLSEGSDKNGYHFPYTAEEDHLPARKLSHTQPPSLHGSQLMQPPGVGLVNDVNNPGLMGRHTLNGGSRHSSRASSPPSTMVAPMQPLGPLTSITDTERNIDDDETTV.

A signal peptide spans 1-29; the sequence is MQTREFPQRPLGLLLVLLVVLLQSSLIKS. The Extracellular portion of the chain corresponds to 30-2816; sequence YLIIVHEDTP…EPSLLVQITS (2787 aa). Asn-46, Asn-179, and Asn-340 each carry an N-linked (GlcNAc...) asparagine glycan. 8 consecutive Cadherin domains span residues 360-464, 465-581, 582-689, 690-794, 795-897, 898-1007, 1008-1113, and 1114-1220; these read EQAL…SPTF, EAEQ…YPQF, SERT…APRF, YTSQ…DPAF, NPKY…APIF, ENAP…APAF, KSPL…PPTF, and ASDK…APVL. Residue Asn-671 is glycosylated (N-linked (GlcNAc...) asparagine). A glycan (N-linked (GlcNAc...) asparagine) is linked at Asn-886. 3 N-linked (GlcNAc...) asparagine glycosylation sites follow: Asn-1269, Asn-1374, and Asn-1441. One can recognise an EGF-like 1; calcium-binding domain in the interval 1482–1518; that stretch reads EVDLCYSDPCQNGGTCVRREGGYTCVCPSTHTGQNCE. Intrachain disulfides connect Cys-1486–Cys-1497, Cys-1491–Cys-1506, and Cys-1508–Cys-1517. In terms of domain architecture, Laminin G-like 1 spans 1556 to 1753; sequence LRARAFGRNS…VADNGTLAGC (198 aa). Asn-1650, Asn-1678, and Asn-1747 each carry an N-linked (GlcNAc...) asparagine glycan. 4 disulfides stabilise this stretch: Cys-1727/Cys-1753, Cys-1760/Cys-1771, Cys-1765/Cys-1780, and Cys-1782/Cys-1791. One can recognise an EGF-like 2; calcium-binding domain in the interval 1756-1792; sequence KAPLCQSEPCFNGGTCREGWGTYSCECPEGYAGNSCQ. One can recognise a Laminin G-like 2 domain in the interval 1796–1963; sequence PAPWRFSGDG…TIRENVEDGC (168 aa). The N-linked (GlcNAc...) asparagine glycan is linked to Asn-1843. Intrachain disulfides connect Cys-1937–Cys-1963, Cys-1969–Cys-1979, Cys-1973–Cys-1988, and Cys-1990–Cys-1999. An EGF-like 3; calcium-binding domain is found at 1965–2000; sequence SRAQCPDHCPNHSSCQSSWDLSTCECDSGYVGTDCA. N-linked (GlcNAc...) asparagine glycosylation is present at Asn-1975. N-linked (GlcNAc...) asparagine glycosylation is found at Asn-2016, Asn-2028, Asn-2071, and Asn-2088. Intrachain disulfides connect Cys-2092–Cys-2095, Cys-2097–Cys-2114, Cys-2116–Cys-2125, and Cys-2128–Cys-2140. Positions 2095–2142 constitute a Laminin EGF-like domain; sequence CDCYSIGSFSGACNPLTGQCECREGVIGRRCDSCSNPYAEVTLSGCEV. N-linked (GlcNAc...) asparagine glycosylation is found at Asn-2196 and Asn-2320. A compositionally biased stretch (basic and acidic residues) spans 2553 to 2562; it reads QETQRLEIPS. Disordered regions lie at residues 2553-2582, 2610-2635, and 2654-2684; these read QETQ…STEQ, HEIP…EREP, and VISP…GENE. The span at 2567-2579 shows a compositional bias: low complexity; that stretch reads SSSSPSSSSSSGS. A GAIN-B domain is found at 2653-2803; that stretch reads EVISPDSPEM…AVIVDVIDPE (151 aa). 2 disulfides stabilise this stretch: Cys-2747/Cys-2785 and Cys-2762/Cys-2787. Residues 2747–2803 form a GPS region; the sequence is CVRWNSFTNQWTRLGCQTEIPDFDGDFNPAAQQAILVNCSCTHISSYAVIVDVIDPE. Asn-2784 is a glycosylation site (N-linked (GlcNAc...) asparagine). A helical transmembrane segment spans residues 2817–2837; that stretch reads YSAFLVSLPLLLGVLLALALL. Topologically, residues 2838–2845 are cytoplasmic; sequence RGQQTNSN. A helical membrane pass occupies residues 2846-2866; sequence TIHQNIVLCVFCAELLFFVGM. Residues 2867–2883 lie on the Extracellular side of the membrane; the sequence is QSRRQLLESEFPCKLTA. The chain crosses the membrane as a helical span at residues 2884 to 2904; the sequence is ICLHYFWLAAFAWTTVDCVHL. The Cytoplasmic segment spans residues 2905–2919; it reads YRMLTEMRDINHGPM. The helical transmembrane segment at 2920 to 2940 threads the bilayer; the sequence is GFYFAMGYGAPAIVVGLSVGV. The Extracellular portion of the chain corresponds to 2941–2959; sequence RAHEYGNSLFCWLSVYEPV. A helical membrane pass occupies residues 2960 to 2980; the sequence is VWWLVGPIAGMSVVNLLILFV. The Cytoplasmic segment spans residues 2981-3000; it reads SVKAAFTLKDHVLGFGNLRT. A helical membrane pass occupies residues 3001–3021; the sequence is LLWLSVVSLPLMGVMWVLAVL. Over 3022-3031 the chain is Extracellular; that stretch reads AASEHSQLLS. The chain crosses the membrane as a helical span at residues 3032–3052; the sequence is LLLSGVVLLHALFCLIGYCII. At 3053–3579 the chain is on the cytoplasmic side; the sequence is NKRVRENLQR…RNIDDDETTV (527 aa). 4 disordered regions span residues 3111-3225, 3343-3377, 3458-3486, and 3499-3579; these read GISA…TPAY, LYGR…SGSQ, YHQQ…YHFP, and LSHT…ETTV. Positions 3113–3128 are enriched in low complexity; sequence SASSTTSRSTAKTSSS. Basic and acidic residues predominate over residues 3167-3191; that stretch reads RGGEEKPSRRQRKDSDSGSETDGRS. Residues Ser-3199 and Ser-3200 each carry the phosphoserine modification. A compositionally biased stretch (polar residues) spans 3208–3223; it reads ARSSGTHRSTAVSSTP. Residues 3343-3352 show a composition bias toward basic and acidic residues; sequence LYGRRGEYPD. Residues 3459–3468 are compositionally biased toward low complexity; it reads HQQQQQQQQH. Positions 3469–3482 are enriched in basic and acidic residues; it reads HLQDRLSEGSDKNG. The segment covering 3501-3513 has biased composition (polar residues); the sequence is HTQPPSLHGSQLM.

Belongs to the G-protein coupled receptor 2 family. In terms of assembly, interacts with ATP6AP2 (via N-terminus). As to expression, in the pupal wing, expressed at relatively even levels in all regions. Abundant in 6-9 hours embryos. Expressed at higher levels in pupae than larvae.

Its subcellular location is the cell membrane. The protein resides in the apical cell membrane. In terms of biological role, involved in the fz signaling pathway that controls wing tissue polarity. Also mediates homophilic cell adhesion. May play a role in initiating prehair morphogenesis. May play a critical role in tissue polarity and in formation of normal dendrite fields. During planar cell polarity, stabilizes asymmetric PCP domains together with ATP6AP2. This Drosophila melanogaster (Fruit fly) protein is Protocadherin-like wing polarity protein stan (stan).